A 414-amino-acid chain; its full sequence is Procollagen C-endopeptidase enhancer 2 (414 aa).

Positions 1–22 (MGGASACIPLCLLLATARMARP) are cleaved as a signal peptide. Cystine bridges form between Cys32/Cys58, Cys85/Cys106, Cys153/Cys180, Cys207/Cys230, Cys296/Cys363, Cys300/Cys366, and Cys311/Cys414. CUB domains are found at residues 32-143 (CGGI…YSAA) and 153-267 (CGGR…YKFR). The 119-residue stretch at 296–414 (CQQKCRRMGT…PMNALKNKQC (119 aa)) folds into the NTR domain. A glycan (N-linked (GlcNAc...) asparagine) is linked at Asn354.

As to quaternary structure, interacts with heparin with high affinity, and type I or II collagen. O-glycosylated; contains sialic acid.

It localises to the secreted. In terms of biological role, binds to the C-terminal propeptide of types I and II procollagens and may enhance the cleavage of that propeptide by BMP1. This is Procollagen C-endopeptidase enhancer 2 (Pcolce2) from Mus musculus (Mouse).